The primary structure comprises 560 residues: MVTPVTWMDNPIEVYVNDSVWVPGPTDDRCPAKPEEEGMMINISIGYHYPPICLGRAPGCLMPAVQNWLVEVPTVSPNSRFTYHMVSGMSLRPRVNCLQDFSYQRSLKFRPKGKTCPKEIPKGSKNTEVLVWEECVANSVVILQNNEFGTIIDWAPRGQFYHNCSGQTQSCPSAQVSPAVDSDLTESLDKHKHKKLQSFYLWEWEEKGISTPRPKIISPVSGPEHPELWRLTVASHHIRIWSGNQTLETRYRKPFYTIDLNSILTVPLQSCVKPPYMLVVGNIVIKPASQTITCENCRLFTCIDSTFNWQHRILLVRAREGMWIPVSTDRPWEASPSIHILTEILKGVLNRSKRFIFTLIAVIMGLIAVTATAAVAGVALHSSVQSVNFVNYWQKNSTRLWNSQSSIDQKLASQINDLRQTVIWMGDRLMTLEHHFQLQCDWNTSDFCITPQIYNESEHHWDMVRRHLQGREDNLTLDISKLKEQIFEASKAHLNLVPGTEAIAGVADGLANLNPVTWIKTIRSTMIINLILIVVCLFCLLLVCRCTQQLRRDSDIENGP.

Residues 355–375 form a fusion peptide region; that stretch reads FIFTLIAVIMGLIAVTATAAV. The helical transmembrane segment at 522–542 threads the bilayer; it reads IRSTMIINLILIVVCLFCLLL.

This sequence belongs to the beta type-B retroviral envelope protein family. HERV class-II K(HML-2) env subfamily. As to quaternary structure, the surface (SU) and transmembrane (TM) proteins form a heterodimer. SU and TM are attached by noncovalent interactions or by a labile interchain disulfide bond. Post-translationally, specific enzymatic cleavages in vivo yield the mature SU and TM proteins. In terms of tissue distribution, expressed at higher level in the thymus. Expressed at lower level in peripheral blood lymphocytes.

It is found in the cell membrane. It localises to the virion. Functionally, retroviral envelope proteins mediate receptor recognition and membrane fusion during early infection. Endogenous envelope proteins may have kept, lost or modified their original function during evolution. This envelope protein has superantigenic properties. Its function is as follows. SU mediates receptor recognition. In terms of biological role, TM anchors the envelope heterodimer to the viral membrane through one transmembrane domain. The other hydrophobic domain, called fusion peptide, mediates fusion of the viral membrane with the target cell membrane. The polypeptide is Endogenous retrovirus group K member 18 Env polyprotein (ERVK-18) (Homo sapiens (Human)).